Here is a 313-residue protein sequence, read N- to C-terminus: Desiccation-related protein PCC13-62 (313 aa).

Positions 1–26 (MAQQPTFASAALVSFFLALICSCSYA) are cleaved as a signal peptide.

The protein is Desiccation-related protein PCC13-62 of Craterostigma plantagineum (Blue gem).